We begin with the raw amino-acid sequence, 327 residues long: DNA-directed RNA polymerase subunit alpha (327 aa).

Residues 1 to 243 (MEKFLKYEIK…EHLNPIVNVN (243 aa)) form an alpha N-terminal domain (alpha-NTD) region. The interval 260 to 327 (RVRSFAKQIE…VHELGLKLRS (68 aa)) is alpha C-terminal domain (alpha-CTD).

It belongs to the RNA polymerase alpha chain family. Homodimer. The RNAP catalytic core consists of 2 alpha, 1 beta, 1 beta' and 1 omega subunit. When a sigma factor is associated with the core the holoenzyme is formed, which can initiate transcription.

It catalyses the reaction RNA(n) + a ribonucleoside 5'-triphosphate = RNA(n+1) + diphosphate. Functionally, DNA-dependent RNA polymerase catalyzes the transcription of DNA into RNA using the four ribonucleoside triphosphates as substrates. The polypeptide is DNA-directed RNA polymerase subunit alpha (Mycoplasma pneumoniae (strain ATCC 29342 / M129 / Subtype 1) (Mycoplasmoides pneumoniae)).